We begin with the raw amino-acid sequence, 236 residues long: C-&gt;U-editing enzyme APOBEC-1 (236 aa).

In terms of domain architecture, CMP/dCMP-type deaminase spans 10–134 (KDYTLRRRIE…RRNRQGLKDL (125 aa)). Residue His61 participates in Zn(2+) binding. Glu63 functions as the Proton donor in the catalytic mechanism. Zn(2+)-binding residues include Cys93 and Cys96.

The protein belongs to the cytidine and deoxycytidylate deaminase family. As to quaternary structure, homodimer. Interacts with A1CF; form an mRNA editing complex. Interacts with RBM47; form an mRNA editing complex. Found in a complex with CELF2/CUGBP2 and A1CF. Interacts with HNRPAB. Interacts with SYNCRIP. It depends on Zn(2+) as a cofactor. In terms of tissue distribution, expressed exclusively in the intestine.

It localises to the cytoplasm. The protein localises to the nucleus. It carries out the reaction a cytidine in mRNA + H2O + H(+) = a uridine in mRNA + NH4(+). The catalysed reaction is cytidine(6666) in apoB mRNA + H2O + H(+) = uridine(6666) in apoB mRNA + NH4(+). In terms of biological role, cytidine deaminase catalyzing the cytidine to uridine postranscriptional editing of a variety of mRNAs. Form complexes with cofactors that confer differential editing activity and selectivity. Responsible for the postranscriptional editing of a CAA codon for Gln to a UAA codon for stop in the apolipoprotein B mRNA. Also involved in CGA (Arg) to UGA (Stop) editing in the NF1 mRNA. May also play a role in the epigenetic regulation of gene expression by participating in DNA demethylation. In Oryctolagus cuniculus (Rabbit), this protein is C-&gt;U-editing enzyme APOBEC-1.